A 233-amino-acid chain; its full sequence is uncharacterized protein (233 aa).

Belongs to the LutC/YkgG family.

This is an uncharacterized protein from Neisseria meningitidis serogroup B (strain ATCC BAA-335 / MC58).